The sequence spans 149 residues: Endoribonuclease YbeY (149 aa).

Zn(2+) contacts are provided by histidine 106, histidine 110, and histidine 116.

The protein belongs to the endoribonuclease YbeY family. Zn(2+) is required as a cofactor.

The protein localises to the cytoplasm. Single strand-specific metallo-endoribonuclease involved in late-stage 70S ribosome quality control and in maturation of the 3' terminus of the 16S rRNA. The polypeptide is Endoribonuclease YbeY (Methylobacillus flagellatus (strain ATCC 51484 / DSM 6875 / VKM B-1610 / KT)).